The following is a 416-amino-acid chain: Gamma-glutamyl phosphate reductase (416 aa).

This sequence belongs to the gamma-glutamyl phosphate reductase family.

It is found in the cytoplasm. The catalysed reaction is L-glutamate 5-semialdehyde + phosphate + NADP(+) = L-glutamyl 5-phosphate + NADPH + H(+). Its pathway is amino-acid biosynthesis; L-proline biosynthesis; L-glutamate 5-semialdehyde from L-glutamate: step 2/2. Its function is as follows. Catalyzes the NADPH-dependent reduction of L-glutamate 5-phosphate into L-glutamate 5-semialdehyde and phosphate. The product spontaneously undergoes cyclization to form 1-pyrroline-5-carboxylate. The sequence is that of Gamma-glutamyl phosphate reductase from Salmonella newport (strain SL254).